Here is a 1020-residue protein sequence, read N- to C-terminus: Calcium-transporting ATPase sarcoplasmic/endoplasmic reticulum type (1020 aa).

Residues 1-48 are Cytoplasmic-facing; that stretch reads MEDGHSKTVEQSLNFFGTDPERGLTLDQIKANQKKYGPNELPTEEGKS. A helical transmembrane segment spans residues 49–69; that stretch reads IWQLVLEQFDDLLVKILLLAA. Residues 70-89 are Lumenal-facing; that stretch reads IISFVLALFEEHEETFTAFV. The helical transmembrane segment at 90–110 threads the bilayer; it reads EPLVILLILIANAVVGVWQER. Over 111-253 the chain is Cytoplasmic; the sequence is NAESAIEALK…EIKTPLQQKL (143 aa). Ser240 is modified (phosphoserine). Residues 254–273 traverse the membrane as a helical segment; sequence DEFGEQLSKVISVICVAVWA. The Lumenal portion of the chain corresponds to 274 to 295; that stretch reads INIGHFNDPAHGGSWIKGAIYY. Residues 296–313 form a helical membrane-spanning segment; it reads FKIAVALAVAAIPEGLPA. Ca(2+) is bound by residues Val304, Ala305, Ile307, and Glu309. The Cytoplasmic segment spans residues 314-757; sequence VITTCLALGT…EEGRAIYNNM (444 aa). The active-site 4-aspartylphosphate intermediate is Asp351. Mg(2+)-binding residues include Asp703 and Asp707. A helical membrane pass occupies residues 758–777; that stretch reads KQFIRYLISSNIGEVVSIFL. 2 residues coordinate Ca(2+): Asn768 and Glu771. The Lumenal segment spans residues 778–787; the sequence is TAALGLPEAL. A helical membrane pass occupies residues 788–808; sequence IPVQLLWVNLVTDGLPATALG. Residues Asn796, Thr799, and Asp800 each contribute to the Ca(2+) site. Topologically, residues 809-828 are cytoplasmic; the sequence is FNPPDLDIMEKPPRKADEGL. Residues 829–851 form a helical membrane-spanning segment; it reads ISGWLFFRYMAIGFYVGAATVGA. Residues 852–897 lie on the Lumenal side of the membrane; that stretch reads AAWWFVFSDEGPKLSYWQLTHHLSCLGGGDEFKGVDCKIFSDPHAM. Residues 898–917 traverse the membrane as a helical segment; that stretch reads TMALSVLVTIEMLNAMNSLS. Glu908 provides a ligand contact to Ca(2+). Residues 918–930 lie on the Cytoplasmic side of the membrane; sequence ENQSLITMPPWCN. Residues 931–949 traverse the membrane as a helical segment; it reads LWLIGSMALSFTLHFVILY. The Lumenal segment spans residues 950–964; that stretch reads VDVLSTVFQVTPLSA. The chain crosses the membrane as a helical span at residues 965-985; it reads EEWITVMKFSIPVVLLDETLK. Topologically, residues 986-1020 are cytoplasmic; that stretch reads FVARKIADGESPIYKMHGIVLMWAVFFGLLYAMML.

This sequence belongs to the cation transport ATPase (P-type) (TC 3.A.3) family. In terms of assembly, interacts with SclA and SclB.

The protein resides in the endoplasmic reticulum membrane. It localises to the sarcoplasmic reticulum membrane. The enzyme catalyses Ca(2+)(in) + ATP + H2O = Ca(2+)(out) + ADP + phosphate + H(+). Functionally, this magnesium-dependent enzyme catalyzes the hydrolysis of ATP coupled with the transport of calcium. This is Calcium-transporting ATPase sarcoplasmic/endoplasmic reticulum type from Drosophila melanogaster (Fruit fly).